Consider the following 130-residue polypeptide: Small ribosomal subunit protein uS11 (130 aa).

It belongs to the universal ribosomal protein uS11 family. As to quaternary structure, part of the 30S ribosomal subunit. Interacts with proteins S7 and S18. Binds to IF-3.

Functionally, located on the platform of the 30S subunit, it bridges several disparate RNA helices of the 16S rRNA. Forms part of the Shine-Dalgarno cleft in the 70S ribosome. This chain is Small ribosomal subunit protein uS11, found in Thiobacillus denitrificans (strain ATCC 25259 / T1).